The following is a 101-amino-acid chain: Small ribosomal subunit protein uS14 (101 aa).

The tract at residues 1 to 22 (MAKVSSIKKNESRKKKSQSLHN) is disordered. Basic residues predominate over residues 11–22 (ESRKKKSQSLHN).

The protein belongs to the universal ribosomal protein uS14 family. Part of the 30S ribosomal subunit. Contacts proteins S3 and S10.

In terms of biological role, binds 16S rRNA, required for the assembly of 30S particles and may also be responsible for determining the conformation of the 16S rRNA at the A site. This Rickettsia conorii (strain ATCC VR-613 / Malish 7) protein is Small ribosomal subunit protein uS14.